The following is a 201-amino-acid chain: Probable molybdenum cofactor guanylyltransferase (201 aa).

GTP is bound by residues 16–18 (LAG), lysine 28, aspartate 75, and aspartate 107. Residue aspartate 107 participates in Mg(2+) binding.

It belongs to the MobA family. Mg(2+) serves as cofactor.

The protein resides in the cytoplasm. The enzyme catalyses Mo-molybdopterin + GTP + H(+) = Mo-molybdopterin guanine dinucleotide + diphosphate. In terms of biological role, transfers a GMP moiety from GTP to Mo-molybdopterin (Mo-MPT) cofactor (Moco or molybdenum cofactor) to form Mo-molybdopterin guanine dinucleotide (Mo-MGD) cofactor. The chain is Probable molybdenum cofactor guanylyltransferase from Mycobacterium bovis (strain ATCC BAA-935 / AF2122/97).